The primary structure comprises 251 residues: Flap endonuclease Xni (251 aa).

Asp104 lines the Mg(2+) pocket. One can recognise a 5'-3' exonuclease domain in the interval 160 to 248; it reads VSPQQLSDYW…ALTGNLQQLR (89 aa). Leu171, Ala172, Pro180, Val182, and Ile185 together coordinate K(+). The interaction with DNA stretch occupies residues 184 to 189; that stretch reads GIGPKT.

It belongs to the Xni family. Mg(2+) is required as a cofactor. It depends on K(+) as a cofactor.

Its function is as follows. Has flap endonuclease activity. During DNA replication, flap endonucleases cleave the 5'-overhanging flap structure that is generated by displacement synthesis when DNA polymerase encounters the 5'-end of a downstream Okazaki fragment. The sequence is that of Flap endonuclease Xni from Serratia proteamaculans (strain 568).